The sequence spans 196 residues: Glycerol-3-phosphate acyltransferase (196 aa).

5 consecutive transmembrane segments (helical) span residues 1-21, 53-73, 76-96, 115-135, and 141-161; these read MGFIIGFLLSVFGYLLGSILF, KYGALVFLLDAFKGFLIAILD, YIDPSSLWFGIVMVSPVIGHI, VVFGISPLLALKMFLVWAFVF, and VSLASITSVLVGYFLFLEGDF.

The protein belongs to the PlsY family. As to quaternary structure, probably interacts with PlsX.

The protein resides in the cell inner membrane. The catalysed reaction is an acyl phosphate + sn-glycerol 3-phosphate = a 1-acyl-sn-glycero-3-phosphate + phosphate. The protein operates within lipid metabolism; phospholipid metabolism. Functionally, catalyzes the transfer of an acyl group from acyl-phosphate (acyl-PO(4)) to glycerol-3-phosphate (G3P) to form lysophosphatidic acid (LPA). This enzyme utilizes acyl-phosphate as fatty acyl donor, but not acyl-CoA or acyl-ACP. This Hydrogenobaculum sp. (strain Y04AAS1) protein is Glycerol-3-phosphate acyltransferase.